Reading from the N-terminus, the 705-residue chain is p-hydroxybenzoic acid--AMP ligase FadD22 (705 aa).

The 79-residue stretch at 541–619 (ERQRLVVDAV…GLAQYLEAEL (79 aa)) folds into the Carrier domain. Residue serine 579 is modified to O-(pantetheine 4'-phosphoryl)serine.

Belongs to the ATP-dependent AMP-binding enzyme family.

It carries out the reaction holo-[4-hydroxyphenylalkanoate synthase] + 4-hydroxybenzoate + ATP = 4-hydroxyphenyl-[4-hydroxyphenylalkanoate synthase] + AMP + diphosphate. The protein operates within lipid metabolism; fatty acid biosynthesis. Functionally, catalyzes the adenylation of p-hydroxybenzoic acid (pHBA) to form p-hydroxybenzoic acid-AMP (pHBA-AMP), which is converted directly to p-hydroxybenzoyl-S-FadD22 (pHBA-S-FAdD22) thioester intermediate in a CoA-independent manner by attack of the phosphopantetheine thiol of FadD22. Usually, this intermediate primes the biosynthesis of the phenolphthiocerol (PPOL) by presenting the pHBA starter unit for elongation by Pks15/1, but M.tuberculosis lacks Pks15/1 due to a natural frameshift and thus is unable to produce PPOL. This chain is p-hydroxybenzoic acid--AMP ligase FadD22 (fadD22), found in Mycobacterium tuberculosis (strain CDC 1551 / Oshkosh).